Here is a 760-residue protein sequence, read N- to C-terminus: Xaa-Pro dipeptidyl-peptidase (760 aa).

Residues serine 349, aspartate 469, and histidine 499 each act as charge relay system in the active site.

Belongs to the peptidase S15 family. Homodimer.

It localises to the cytoplasm. It carries out the reaction Hydrolyzes Xaa-Pro-|- bonds to release unblocked, N-terminal dipeptides from substrates including Ala-Pro-|-p-nitroanilide and (sequentially) Tyr-Pro-|-Phe-Pro-|-Gly-Pro-|-Ile.. Removes N-terminal dipeptides sequentially from polypeptides having unsubstituted N-termini provided that the penultimate residue is proline. This chain is Xaa-Pro dipeptidyl-peptidase, found in Streptococcus pyogenes serotype M1.